A 355-amino-acid chain; its full sequence is Beta-porphyranase C (355 aa).

The first 18 residues, 1–18 (MIKTLKRIPLVFLIAIMA), serve as a signal peptide directing secretion. Residue Cys19 is the site of N-palmitoyl cysteine attachment. Cys19 carries S-diacylglycerol cysteine lipidation. A disordered region spans residues 22 to 72 (SGDNGKDKVEEQEQAQEQGEKKGQGEERDKEDGIDGLQPTFLADQDPKPDD). Over residues 39 to 54 (QGEKKGQGEERDKEDG) the composition is skewed to basic and acidic residues. The region spanning 71-355 (DDKKWIKVEG…WVRVWQLEDL (285 aa)) is the GH16 domain. The substrate site is built by Trp110, Glu208, and Glu213. The active-site Nucleophile is the Glu208. Glu213 serves as the catalytic Proton donor.

Belongs to the glycosyl hydrolase 16 family.

The protein resides in the cell outer membrane. It carries out the reaction Hydrolysis of beta-D-galactopyranose-(1-&gt;4)-alpha-L-galactopyranose-6-sulfate linkages in porphyran.. In terms of biological role, cleaves the sulfated polysaccharide porphyran at the (1-&gt;4) linkages between beta-D-galactopyranose and alpha-L-galactopyranose-6-sulfate, forming mostly the disaccharide alpha-L-galactopyranose-6-sulfate-(1-&gt;3)-beta-D-galactose. This Zobellia galactanivorans (strain DSM 12802 / CCUG 47099 / CIP 106680 / NCIMB 13871 / Dsij) protein is Beta-porphyranase C (porC).